A 150-amino-acid polypeptide reads, in one-letter code: Avidin-related protein 4/5 (150 aa).

The N-terminal stretch at 1-24 (MVHTTSPLLLLLLLSLALVAPSLS) is a signal peptide. The 122-residue stretch at 26-147 (RKCSLTGKWT…GYNNFTRLCT (122 aa)) folds into the Avidin-like domain. C28 and C105 form a disulfide bridge. The biotin site is built by N36, S40, Y57, T59, and D63. N-linked (GlcNAc...) asparagine glycans are attached at residues N67 and N93. Biotin-binding residues include S95 and N140. N-linked (GlcNAc...) asparagine glycosylation is present at N141.

The protein belongs to the avidin/streptavidin family. Homotetramer.

It is found in the secreted. Its function is as follows. Forms a strong non-covalent specific complex with biotin. This Gallus gallus (Chicken) protein is Avidin-related protein 4/5 (AVR4).